Reading from the N-terminus, the 228-residue chain is 7-cyano-7-deazaguanine synthase (228 aa).

9-19 contacts ATP; it reads LSGGPDSTTVL. 4 residues coordinate Zn(2+): C193, C203, C206, and C209.

Belongs to the QueC family. Zn(2+) is required as a cofactor.

The catalysed reaction is 7-carboxy-7-deazaguanine + NH4(+) + ATP = 7-cyano-7-deazaguanine + ADP + phosphate + H2O + H(+). Its pathway is purine metabolism; 7-cyano-7-deazaguanine biosynthesis. Catalyzes the ATP-dependent conversion of 7-carboxy-7-deazaguanine (CDG) to 7-cyano-7-deazaguanine (preQ(0)). In Rickettsia conorii (strain ATCC VR-613 / Malish 7), this protein is 7-cyano-7-deazaguanine synthase.